The primary structure comprises 212 residues: ER lumen protein-retaining receptor 2 (212 aa).

Over 1–4 (MNIF) the chain is Lumenal. The helical transmembrane segment at 5-24 (RLTGDLSHLAAIIILLLKIW) threads the bilayer. At 25–32 (KSRSCAGI) the chain is on the cytoplasmic side. A helical transmembrane segment spans residues 33-52 (SGKSQLLFALVFTTRYLDLF). The interaction with the K-D-E-L motif on target proteins stretch occupies residues 47–48 (RY). Residues 53–58 (TSFISL) lie on the Lumenal side of the membrane. A helical transmembrane segment spans residues 59 to 79 (YNTSMKLIYIACSYATVYLIY). Topologically, residues 80–92 (MKFKATYDGNHDT) are cytoplasmic. The helical transmembrane segment at 93 to 110 (FRVEFLIVPVGGLSFLVN) threads the bilayer. Over 111 to 116 (HDFSPL) the chain is Lumenal. Residues 117–135 (EILWTFSIYLESVAILPQL) form a helical membrane-spanning segment. Over 136 to 149 (FMISKTGEAETITT) the chain is Cytoplasmic. The helical transmembrane segment at 150–168 (HYLFFLGLYRALYLVNWIW) threads the bilayer. The segment at 159 to 169 (RALYLVNWIWR) is interaction with the K-D-E-L motif on target proteins. Over 169 to 178 (RYYFEGFFDL) the chain is Lumenal. A helical membrane pass occupies residues 179–199 (IAVVAGVVQTVLYCDFFYLYV). Over 200-212 (TKVLKGKKLSLPA) the chain is Cytoplasmic. Positions 204 to 207 (KGKK) are important for recycling of cargo proteins with the sequence motif K-D-E-L from the Golgi to the endoplasmic reticulum.

This sequence belongs to the ERD2 family.

The protein resides in the endoplasmic reticulum membrane. Its subcellular location is the golgi apparatus membrane. It localises to the cytoplasmic vesicle. The protein localises to the COPI-coated vesicle membrane. Functionally, membrane receptor that binds the K-D-E-L sequence motif in the C-terminal part of endoplasmic reticulum resident proteins and maintains their localization in that compartment by participating to their vesicle-mediated recycling back from the Golgi. Binding is pH dependent, and is optimal at pH 5-5.4. The protein is ER lumen protein-retaining receptor 2 (KDELR2) of Gallus gallus (Chicken).